Reading from the N-terminus, the 429-residue chain is Glutamate-1-semialdehyde 2,1-aminomutase 2 (429 aa).

Lys-268 is subject to N6-(pyridoxal phosphate)lysine.

Belongs to the class-III pyridoxal-phosphate-dependent aminotransferase family. HemL subfamily. Homodimer. Pyridoxal 5'-phosphate serves as cofactor.

Its subcellular location is the cytoplasm. The catalysed reaction is (S)-4-amino-5-oxopentanoate = 5-aminolevulinate. It participates in porphyrin-containing compound metabolism; protoporphyrin-IX biosynthesis; 5-aminolevulinate from L-glutamyl-tRNA(Glu): step 2/2. The protein is Glutamate-1-semialdehyde 2,1-aminomutase 2 of Staphylococcus epidermidis (strain ATCC 35984 / DSM 28319 / BCRC 17069 / CCUG 31568 / BM 3577 / RP62A).